A 234-amino-acid chain; its full sequence is MIRTLFSDTPFPPLEQALIEPNGLLAAGGDLSPERLISAYQQGIFPWFNQGEVILWWSPNPRMVLFPQELKISRSLHKTLKKNHYQIRTDSAFTQVMQACAAPREKQTGTWIHPEMVAAYTTLHQRGIAHSVETWVDGELVGGLYGVAIGKAFFGESMFSRVPDASKIALVYLARQLERQGYGLIDCQMKTAHLMSMGAREIPRLQFSKLLGKLTDQPEQNRKWHFDFTWPKQQ.

The protein belongs to the L/F-transferase family.

It localises to the cytoplasm. The enzyme catalyses N-terminal L-lysyl-[protein] + L-leucyl-tRNA(Leu) = N-terminal L-leucyl-L-lysyl-[protein] + tRNA(Leu) + H(+). It carries out the reaction N-terminal L-arginyl-[protein] + L-leucyl-tRNA(Leu) = N-terminal L-leucyl-L-arginyl-[protein] + tRNA(Leu) + H(+). It catalyses the reaction L-phenylalanyl-tRNA(Phe) + an N-terminal L-alpha-aminoacyl-[protein] = an N-terminal L-phenylalanyl-L-alpha-aminoacyl-[protein] + tRNA(Phe). Functions in the N-end rule pathway of protein degradation where it conjugates Leu, Phe and, less efficiently, Met from aminoacyl-tRNAs to the N-termini of proteins containing an N-terminal arginine or lysine. In Nitrosomonas eutropha (strain DSM 101675 / C91 / Nm57), this protein is Leucyl/phenylalanyl-tRNA--protein transferase.